The sequence spans 150 residues: Protein NrdI (150 aa).

This sequence belongs to the NrdI family.

Its function is as follows. Probably involved in ribonucleotide reductase function. The sequence is that of Protein NrdI from Mycobacterium avium (strain 104).